Reading from the N-terminus, the 299-residue chain is Protease HtpX homolog (299 aa).

The next 2 membrane-spanning stretches (helical) occupy residues 15-35 (MFLTMFLLAALYLFFLAVLWQ) and 37-57 (GVSYTGIIVFVAIMLGVQYYF). H140 contributes to the Zn(2+) binding site. E141 is an active-site residue. H144 is a binding site for Zn(2+). Helical transmembrane passes span 158–178 (FFATVASFIVQNFFYWGGAFG) and 187–207 (NNIMLVYLASLVVWLVSYFLI). E215 is a binding site for Zn(2+).

Belongs to the peptidase M48B family. Zn(2+) serves as cofactor.

The protein localises to the cell membrane. This chain is Protease HtpX homolog, found in Moorella thermoacetica (strain ATCC 39073 / JCM 9320).